A 215-amino-acid chain; its full sequence is Cytidylate kinase (215 aa).

Gly-10–Thr-18 lines the ATP pocket.

Belongs to the cytidylate kinase family. Type 1 subfamily.

Its subcellular location is the cytoplasm. The enzyme catalyses CMP + ATP = CDP + ADP. It carries out the reaction dCMP + ATP = dCDP + ADP. In Bartonella tribocorum (strain CIP 105476 / IBS 506), this protein is Cytidylate kinase.